The chain runs to 372 residues: GDP-mannose 4,6-dehydratase (372 aa).

NADP(+) contacts are provided by residues 9-14, 64-65, 86-90, and Tyr101; these read GVTGQD, DL, and LGAQS. The active site involves Thr133. Residues Glu135 and Tyr157 each act as nucleophile in the active site. Residues Lys161, His187, and Arg192 each coordinate NADP(+).

It belongs to the NAD(P)-dependent epimerase/dehydratase family. GDP-mannose 4,6-dehydratase subfamily. Requires NADP(+) as cofactor.

The catalysed reaction is GDP-alpha-D-mannose = GDP-4-dehydro-alpha-D-rhamnose + H2O. It participates in nucleotide-sugar biosynthesis; GDP-L-fucose biosynthesis via de novo pathway; GDP-L-fucose from GDP-alpha-D-mannose: step 1/2. In terms of biological role, catalyzes the conversion of GDP-D-mannose to GDP-4-dehydro-6-deoxy-D-mannose. This is GDP-mannose 4,6-dehydratase from Vibrio cholerae.